Reading from the N-terminus, the 349-residue chain is Leukotriene B4 receptor 1 (349 aa).

The Extracellular segment spans residues methionine 1 to leucine 19. An N-linked (GlcNAc...) asparagine glycan is attached at asparagine 2. The helical transmembrane segment at leucine 20–serine 42 threads the bilayer. Residues isoleucine 43 to alanine 54 lie on the Cytoplasmic side of the membrane. The chain crosses the membrane as a helical span at residues leucine 55–leucine 75. Residues tyrosine 76–arginine 91 are Extracellular-facing. The chain crosses the membrane as a helical span at residues leucine 92–leucine 113. The Cytoplasmic segment spans residues aspartate 114–leucine 138. A helical membrane pass occupies residues alanine 139–histidine 159. Residues leucine 160–arginine 179 lie on the Extracellular side of the membrane. An N-linked (GlcNAc...) asparagine glycan is attached at asparagine 164. Residues alanine 180 to alanine 200 traverse the membrane as a helical segment. At serine 201–arginine 222 the chain is on the cytoplasmic side. A helical transmembrane segment spans residues leucine 223–leucine 243. At alanine 244–histidine 269 the chain is on the extracellular side. A helical transmembrane segment spans residues valine 270–glycine 290. At glycine 291–glutamate 349 the chain is on the cytoplasmic side. The disordered stretch occupies residues serine 311 to glutamate 349.

Belongs to the G-protein coupled receptor 1 family. Post-translationally, phosphorylated by GRK6 upon leukotriene B4 binding; which promotes desensitization.

It is found in the cell membrane. Its function is as follows. Receptor for extracellular ATP &gt; UTP and ADP. The activity of this receptor is mediated by G proteins which activate a phosphatidylinositol-calcium second messenger system. May be the cardiac P2Y receptor involved in the regulation of cardiac muscle contraction through modulation of L-type calcium currents. Is a receptor for leukotriene B4, a potent chemoattractant involved in inflammation and immune response. The protein is Leukotriene B4 receptor 1 (LTB4R) of Bos taurus (Bovine).